Consider the following 206-residue polypeptide: Small ribosomal subunit protein uS4 (206 aa).

The S4 RNA-binding domain maps to 96-156; the sequence is GRLDNVVYRM…EKAKKQSRVK (61 aa).

It belongs to the universal ribosomal protein uS4 family. As to quaternary structure, part of the 30S ribosomal subunit. Contacts protein S5. The interaction surface between S4 and S5 is involved in control of translational fidelity.

Its function is as follows. One of the primary rRNA binding proteins, it binds directly to 16S rRNA where it nucleates assembly of the body of the 30S subunit. Functionally, with S5 and S12 plays an important role in translational accuracy. The chain is Small ribosomal subunit protein uS4 from Yersinia enterocolitica serotype O:8 / biotype 1B (strain NCTC 13174 / 8081).